A 564-amino-acid polypeptide reads, in one-letter code: uncharacterized protein (564 aa).

The first 21 residues, 1–21 (MRRIGAITALSLPVLLSLLYS), serve as a signal peptide directing secretion. Cys22 carries the N-palmitoyl cysteine lipid modification. A lipid anchor (S-diacylglycerol cysteine) is attached at Cys22.

Its subcellular location is the cell membrane. This is an uncharacterized protein from Aquifex aeolicus (strain VF5).